The following is an 83-amino-acid chain: DNA-directed RNA polymerase subunit omega (83 aa).

It belongs to the RNA polymerase subunit omega family. In terms of assembly, the RNAP catalytic core consists of 2 alpha, 1 beta, 1 beta' and 1 omega subunit. When a sigma factor is associated with the core the holoenzyme is formed, which can initiate transcription.

The enzyme catalyses RNA(n) + a ribonucleoside 5'-triphosphate = RNA(n+1) + diphosphate. In terms of biological role, promotes RNA polymerase assembly. Latches the N- and C-terminal regions of the beta' subunit thereby facilitating its interaction with the beta and alpha subunits. This Chromohalobacter salexigens (strain ATCC BAA-138 / DSM 3043 / CIP 106854 / NCIMB 13768 / 1H11) protein is DNA-directed RNA polymerase subunit omega.